We begin with the raw amino-acid sequence, 50 residues long: Large ribosomal subunit protein bL33 (50 aa).

This sequence belongs to the bacterial ribosomal protein bL33 family.

This is Large ribosomal subunit protein bL33 from Sulfurimonas denitrificans (strain ATCC 33889 / DSM 1251) (Thiomicrospira denitrificans (strain ATCC 33889 / DSM 1251)).